A 206-amino-acid polypeptide reads, in one-letter code: Isochorismatase family protein 1B (206 aa).

Belongs to the isochorismatase family.

This Dictyostelium discoideum (Social amoeba) protein is Isochorismatase family protein 1B.